A 528-amino-acid polypeptide reads, in one-letter code: Abrin-a (528 aa).

Pyrrolidone carboxylic acid is present on Gln1. Glu164 is an active-site residue. Cystine bridges form between Cys247/Cys269, Cys286/Cys305, and Cys329/Cys346. One can recognise a Ricin B-type lectin 1 domain in the interval 273–400 (YEPTVRIGGR…YLMRQGWRTG (128 aa)). One copy of the 1-alpha repeat lies at 283–325 (DGMCVDVYDNGYHNGNRIIMWKCKDRLEENQLWTLKSDKTIRS). One copy of the 1-beta repeat lies at 326–366 (NGKCLTTYGYAPGSYVMIYDCTSAVAEATYWEIWDNGTIIN). N-linked (GlcNAc...) asparagine glycans are attached at residues Asn361 and Asn401. Residues 369-401 (SALVLSAESSSMGGTLTVQTNEYLMRQGWRTGN) form a 1-gamma repeat. The Ricin B-type lectin 2 domain occupies 403-527 (TSPFVTSISG…GKPNQIWLTL (125 aa)). One copy of the 2-alpha repeat lies at 414-449 (SDLCMQAQGSNVWMADCDSNKKEQQWALYTDGSIRS). Intrachain disulfides connect Cys417-Cys430 and Cys456-Cys473. One copy of the 2-beta repeat lies at 453–492 (TNNCLTSKDHKQGSTILLMGCSNGWASQRWVFKNDGSIYS). One copy of the 2-gamma repeat lies at 495-528 (DDMVMDVKGSDPSLKQIILWPYTGKPNQIWLTLF).

It in the N-terminal section; belongs to the ribosome-inactivating protein family. Type 2 RIP subfamily. Disulfide-linked dimer of A and B chains.

It carries out the reaction Endohydrolysis of the N-glycosidic bond at one specific adenosine on the 28S rRNA.. The A chain is responsible for inhibiting protein synthesis through the catalytic inactivation of 60S ribosomal subunits by removing adenine from position 4,324 of 28S rRNA. Abrin-a is more toxic than ricin. Functionally, the B chain is a galactose-specific lectin that facilitates the binding of abrin to the cell membrane that precedes endocytosis. The polypeptide is Abrin-a (Abrus precatorius (Indian licorice)).